The following is a 45-amino-acid chain: Myotoxin-2 (45 aa).

Intrachain disulfides connect Cys-4/Cys-36, Cys-11/Cys-30, and Cys-18/Cys-37.

This sequence belongs to the crotamine-myotoxin family. As to quaternary structure, monomer. In terms of tissue distribution, expressed by the venom gland.

The protein localises to the secreted. Its function is as follows. Cationic peptide that possesses multiple functions. It acts as a cell-penetrating peptide (CPP), and as a potent voltage-gated potassium channel (Kv) inhibitor. It exhibits antimicrobial activities, hind limb paralysis, and severe muscle necrosis by a non-enzymatic mechanism. In Crotalus viridis viridis (Prairie rattlesnake), this protein is Myotoxin-2.